An 86-amino-acid chain; its full sequence is DNA-directed RNA polymerase subunit omega (86 aa).

Residues S67–Q76 are compositionally biased toward basic and acidic residues. Residues S67–S86 are disordered. Residues V77–S86 show a composition bias toward acidic residues.

It belongs to the RNA polymerase subunit omega family. The RNAP catalytic core consists of 2 alpha, 1 beta, 1 beta' and 1 omega subunit. When a sigma factor is associated with the core the holoenzyme is formed, which can initiate transcription.

It carries out the reaction RNA(n) + a ribonucleoside 5'-triphosphate = RNA(n+1) + diphosphate. Its function is as follows. Promotes RNA polymerase assembly. Latches the N- and C-terminal regions of the beta' subunit thereby facilitating its interaction with the beta and alpha subunits. This Nitrosococcus oceani (strain ATCC 19707 / BCRC 17464 / JCM 30415 / NCIMB 11848 / C-107) protein is DNA-directed RNA polymerase subunit omega.